A 1662-amino-acid chain; its full sequence is ABC transporter A family member 5 (1662 aa).

The next 7 helical transmembrane spans lie at 30 to 50 (IVFP…VQLF), 242 to 262 (SVFV…ELVV), 284 to 304 (ISWI…IIVI), 317 to 337 (IIVI…AFIF), 346 to 366 (FAGL…IFIG), 377 to 397 (LLLC…IMSI), and 417 to 437 (QIIG…WYLD). An ABC transporter 1 domain is found at 505–739 (ISIRNLRKEF…YGVGYLLTCS (235 aa)). 541-548 (GPNGSGKS) provides a ligand contact to ATP. Transmembrane regions (helical) follow at residues 872–892 (FKAF…SIIV), 1052–1072 (IVYF…SFAG), 1102–1122 (LWDY…LAIV), 1130–1150 (FGLF…LSYL), 1163–1183 (GAIT…MIIL), 1201–1221 (IIDI…VIFI), and 1246–1266 (STPI…ILLI). Positions 1322 to 1557 (LQYKGLHKLF…FGAGYSVEVK (236 aa)) constitute an ABC transporter 2 domain. 1360-1367 (GLNGAGKT) provides a ligand contact to ATP.

It belongs to the ABC transporter superfamily. ABCA family.

The protein resides in the membrane. In Dictyostelium discoideum (Social amoeba), this protein is ABC transporter A family member 5 (abcA5).